We begin with the raw amino-acid sequence, 660 residues long: Squalene--hopene cyclase (660 aa).

The PFTB 1 repeat unit spans residues Glu-73–Gly-114. Asp-394 acts as the Proton donor in catalysis. PFTB repeat units follow at residues Ile-419 to Leu-460 and Ile-536 to Ala-586.

It belongs to the terpene cyclase/mutase family.

It localises to the cell membrane. The enzyme catalyses squalene = hop-22(29)-ene. The catalysed reaction is squalene + H2O = hopan-22-ol. It functions in the pathway secondary metabolite biosynthesis; hopanoid biosynthesis. Functionally, catalyzes the cyclization of squalene into hopene. This is Squalene--hopene cyclase (shc) from Bradyrhizobium diazoefficiens (strain JCM 10833 / BCRC 13528 / IAM 13628 / NBRC 14792 / USDA 110).